The primary structure comprises 425 residues: Pyruvate dehydrogenase E1 component subunit alpha-3, chloroplastic (425 aa).

A chloroplast-targeting transit peptide spans 1–66 (MAAASSFTAA…VLPGNKAAPA (66 aa)). H109, Y135, R136, A184, I186, D224, G225, and N253 together coordinate pyruvate. Thiamine diphosphate contacts are provided by Y135, R136, A184, I186, D224, G225, N253, and H322. Mg(2+) is bound at residue D224. Position 253 (N253) interacts with Mg(2+).

Tetramer of 2 alpha and 2 beta subunits. Thiamine diphosphate is required as a cofactor. The cofactor is Mg(2+).

It localises to the plastid. Its subcellular location is the chloroplast. The catalysed reaction is N(6)-[(R)-lipoyl]-L-lysyl-[protein] + pyruvate + H(+) = N(6)-[(R)-S(8)-acetyldihydrolipoyl]-L-lysyl-[protein] + CO2. In terms of biological role, the pyruvate dehydrogenase complex catalyzes the overall conversion of pyruvate to acetyl-CoA and CO(2). It contains multiple copies of three enzymatic components: pyruvate dehydrogenase (E1), dihydrolipoamide acetyltransferase (E2) and lipoamide dehydrogenase (E3). The chain is Pyruvate dehydrogenase E1 component subunit alpha-3, chloroplastic from Oryza sativa subsp. japonica (Rice).